Here is a 1620-residue protein sequence, read N- to C-terminus: Putative zinc carboxypeptidase (1620 aa).

Residues 1–1367 are Extracellular-facing; it reads MLFKNEDSGN…SYDFLYFDEN (1367 aa). The N-linked (GlcNAc...) asparagine glycan is linked to Asn-19. The interval 32–74 is disordered; it reads RNDNKNNDNEDNKQDDEEKNDEDDNKSNLLLEENEENKRQGDK. A compositionally biased stretch (basic and acidic residues) spans 33-43; sequence NDNKNNDNEDN. The span at 44–55 shows a compositional bias: acidic residues; the sequence is KQDDEEKNDEDD. N-linked (GlcNAc...) asparagine glycans are attached at residues Asn-56 and Asn-102. A disordered region spans residues 309 to 328; sequence GNHYDAHESTNTYDEEKTRE. Residues Asn-354, Asn-487, Asn-508, Asn-529, Asn-550, Asn-571, Asn-589, Asn-687, Asn-802, and Asn-1010 are each glycosylated (N-linked (GlcNAc...) asparagine). Positions 497–559 are possible malaria epitope; it reads VNNLDSTVNY…NSTGNNINNI (63 aa). In terms of domain architecture, Peptidase M14 spans 1004-1261; that stretch reads GENKKNNGTK…FYVQNYFEGY (258 aa). Residues His-1059 and Glu-1062 each contribute to the Zn(2+) site. 2 N-linked (GlcNAc...) asparagine glycosylation sites follow: Asn-1064 and Asn-1141. His-1155 provides a ligand contact to Zn(2+). Glu-1229 (proton donor/acceptor) is an active-site residue. The interval 1279-1329 is disordered; sequence NIKGDDNINGDDNIKGGDNIKGDDNIKRDDNFQRDDNFQRDDNFQRGDNFH. The chain crosses the membrane as a helical span at residues 1368–1388; sequence LLFMTGVSFGICLFKFINFLS. Residues 1389 to 1620 lie on the Cytoplasmic side of the membrane; sequence YHKSSICRRT…SKRKKVIVIL (232 aa). A disordered region spans residues 1560–1620; sequence PNGKYKGPGF…SKRKKVIVIL (61 aa). Positions 1581-1597 are enriched in basic and acidic residues; that stretch reads NKNESKTEKKSKTENKS. The segment covering 1598-1620 has biased composition (basic residues); it reads KSKSKNKSKSKNKSKRKKVIVIL.

The protein belongs to the peptidase M14 family. It depends on Zn(2+) as a cofactor.

It localises to the membrane. The polypeptide is Putative zinc carboxypeptidase (Plasmodium falciparum (isolate 3D7)).